An 86-amino-acid polypeptide reads, in one-letter code: uncharacterized protein (86 aa).

This is an uncharacterized protein from Schizosaccharomyces pombe (strain 972 / ATCC 24843) (Fission yeast).